Here is a 668-residue protein sequence, read N- to C-terminus: Metastasis-associated protein MTA2 (668 aa).

Positions 1 to 144 (MAANMYRVGD…PVQKTLLADQ (144 aa)) constitute a BAH domain. Phosphoserine is present on residues serine 52 and serine 54. The ELM2 domain occupies 145-256 (GEIRVGCKFQ…KAMSTLVPQG (112 aa)). Lysine 152 is subject to N6-acetyllysine. The SANT domain occupies 263-315 (DEMEEWSASEAMLFEEALEKYGKDFNDIRQDFLPWKSLASIVQFYYMWKTTDR). The GATA-type; atypical zinc-finger motif lies at 367 to 394 (CESCHTTQSAQWYAWGPPNMQCRLCASC). A disordered region spans residues 412 to 437 (GAARGTTEPHSRGHLSRPEAQSLSPY). 2 positions are modified to phosphoserine: serine 433 and serine 435. Position 460 is an N6-acetyllysine (lysine 460). A Glycyl lysine isopeptide (Lys-Gly) (interchain with G-Cter in SUMO2 and SUMO3); alternate cross-link involves residue lysine 492. Lysine 492 is covalently cross-linked (Glycyl lysine isopeptide (Lys-Gly) (interchain with G-Cter in SUMO2); alternate). Lysine 508 participates in a covalent cross-link: Glycyl lysine isopeptide (Lys-Gly) (interchain with G-Cter in SUMO2). Lysine 522 and lysine 531 each carry N6-acetyllysine. Threonine 534 is modified (phosphothreonine). Residues lysine 559 and lysine 595 each participate in a glycyl lysine isopeptide (Lys-Gly) (interchain with G-Cter in SUMO2) cross-link. Disordered regions lie at residues 580–599 (ASGI…LNPA) and 647–668 (PPVP…VLED).

This sequence belongs to the metastasis-associated protein family. In terms of assembly, component of the nucleosome remodeling and deacetylase (NuRD) repressor complex, composed of core proteins MTA1, MTA2, MTA3, RBBP4, RBBP7, HDAC1, HDAC2, MBD2, MBD3, and peripherally associated proteins CDK2AP1, CDK2AP2, GATAD2A, GATAD2B, CHD3, CHD4 and CHD5. The exact stoichiometry of the NuRD complex is unknown, and some subunits such as MBD2 and MBD3, GATAD2A and GATAD2B, and CHD3, CHD4 and CHD5 define mutually exclusive NuRD complexes. Interacts with CHD3. Interacts with CHD4. Interacts with GATAD2A. Interacts with HDAC7. Interacts with MBD3. Interacts with p53/TP53. Interacts with MINT. Interacts with PIMREG. Interacts with NACC2. Interacts with ERCC6. Interacts with PWWP2B. Interacts with transcription factor BCL11A.

The protein resides in the nucleus. May function as a transcriptional coregulator. Acts as a component of the histone deacetylase NuRD complex which participates in the remodeling of chromatin. The polypeptide is Metastasis-associated protein MTA2 (Mta2) (Mus musculus (Mouse)).